We begin with the raw amino-acid sequence, 247 residues long: 5-oxoprolinase subunit A 1 (247 aa).

This sequence belongs to the LamB/PxpA family. In terms of assembly, forms a complex composed of PxpA, PxpB and PxpC.

The enzyme catalyses 5-oxo-L-proline + ATP + 2 H2O = L-glutamate + ADP + phosphate + H(+). Its function is as follows. Catalyzes the cleavage of 5-oxoproline to form L-glutamate coupled to the hydrolysis of ATP to ADP and inorganic phosphate. This chain is 5-oxoprolinase subunit A 1, found in Ralstonia nicotianae (strain ATCC BAA-1114 / GMI1000) (Ralstonia solanacearum).